We begin with the raw amino-acid sequence, 302 residues long: Troponin T, cardiac muscle isoforms (302 aa).

Residues 1–55 (MSDSEEVVEEYEQEQEEEYVEEEEEEWLEEDDGQEDQVDEEEEETEETTAEEQED) are compositionally biased toward acidic residues. 3 disordered regions span residues 1–99 (MSDS…GERL), 138–230 (KDRI…RKPL), and 280–302 (SDHQ…GRWK). An N-acetylserine modification is found at serine 2. The residue at position 2 (serine 2) is a Phosphoserine; by CK2. Basic and acidic residues predominate over residues 65–79 (EGDREQEPGEGESKP). Residues 82–93 (KPFMPNLVPPKI) show a composition bias toward pro residues. Basic and acidic residues-rich tracts occupy residues 138–186 (KDRI…EKEA) and 204–230 (KSEK…RKPL).

This sequence belongs to the troponin T family.

Troponin T is the tropomyosin-binding subunit of troponin, the thin filament regulatory complex which confers calcium-sensitivity to striated muscle actomyosin ATPase activity. This is Troponin T, cardiac muscle isoforms (TNNT2) from Gallus gallus (Chicken).